The sequence spans 121 residues: Dihydroneopterin aldolase (121 aa).

Substrate-binding residues include glutamate 16 and methionine 111.

It belongs to the archaeal dihydroneopterin aldolase family. In terms of assembly, homotetramer.

It catalyses the reaction 7,8-dihydroneopterin = 6-hydroxymethyl-7,8-dihydropterin + glycolaldehyde. The protein operates within cofactor biosynthesis; 5,6,7,8-tetrahydromethanopterin biosynthesis. Its function is as follows. Catalyzes the conversion of 7,8-dihydroneopterin (H2Neo) to 6-hydroxymethyl-7,8-dihydropterin (6-HMD). The sequence is that of Dihydroneopterin aldolase from Methanopyrus kandleri (strain AV19 / DSM 6324 / JCM 9639 / NBRC 100938).